We begin with the raw amino-acid sequence, 100 residues long: Urease subunit gamma (100 aa).

Belongs to the urease gamma subunit family. Heterotrimer of UreA (gamma), UreB (beta) and UreC (alpha) subunits. Three heterotrimers associate to form the active enzyme.

Its subcellular location is the cytoplasm. It carries out the reaction urea + 2 H2O + H(+) = hydrogencarbonate + 2 NH4(+). Its pathway is nitrogen metabolism; urea degradation; CO(2) and NH(3) from urea (urease route): step 1/1. This Cupriavidus metallidurans (strain ATCC 43123 / DSM 2839 / NBRC 102507 / CH34) (Ralstonia metallidurans) protein is Urease subunit gamma.